A 351-amino-acid chain; its full sequence is MMTVRDPRFPSSSTTAIQSDAAIKFCDTTLRDGEQAPGVAFTAAEKLAIAAALDAIGVHQIEAGIPAMGVTERDVLREILATDPHADIVGWCRADHRDVEAAASCGLVTAHLTIPVSDLHLKSKLGRDRAWARLRVRDCVADATDRGMRVSVGFEDASRADDAFVTDLAGELRELGVTRLRWADTVGLLDPVSAHDRLGRLVRAVPGPWEIHAHDDFGLATANTIAAVQAGFTWVSTTVLGLGERAGNAPIEEVAMALRHLLKLPVDLDTTSFRSLARLVSRAARRPLPAGKAVVGESVFAHESGIHVHGILRHPATYEPFDPAEVGGRRRLAIGKHSGRASVRYALEQYG.

The Pyruvate carboxyltransferase domain maps to 23 to 272; sequence IKFCDTTLRD…KLPVDLDTTS (250 aa).

Belongs to the alpha-IPM synthase/homocitrate synthase family.

The catalysed reaction is acetyl-CoA + 2-oxoglutarate + H2O = (2R)-homocitrate + CoA + H(+). Functionally, this protein is a Fe-Mo-cofactor biosynthetic component. This chain is Homocitrate synthase (nifV), found in Frankia alni.